The sequence spans 276 residues: Thiazole synthase (276 aa).

The Schiff-base intermediate with DXP role is filled by K117. 1-deoxy-D-xylulose 5-phosphate contacts are provided by residues G178, A204–G205, and N226–T227.

The protein belongs to the ThiG family. In terms of assembly, homotetramer. Forms heterodimers with either ThiH or ThiS.

Its subcellular location is the plastid. It is found in the chloroplast. It catalyses the reaction [ThiS sulfur-carrier protein]-C-terminal-Gly-aminoethanethioate + 2-iminoacetate + 1-deoxy-D-xylulose 5-phosphate = [ThiS sulfur-carrier protein]-C-terminal Gly-Gly + 2-[(2R,5Z)-2-carboxy-4-methylthiazol-5(2H)-ylidene]ethyl phosphate + 2 H2O + H(+). It functions in the pathway cofactor biosynthesis; thiamine diphosphate biosynthesis. Functionally, catalyzes the rearrangement of 1-deoxy-D-xylulose 5-phosphate (DXP) to produce the thiazole phosphate moiety of thiamine. Sulfur is provided by the thiocarboxylate moiety of the carrier protein ThiS. In vitro, sulfur can be provided by H(2)S. The polypeptide is Thiazole synthase (Gracilaria tenuistipitata var. liui (Red alga)).